The chain runs to 89 residues: MSAPRFRNGTFKRTLKRVPGGRKVEHYKKKKPSKHVCAKCGKVLDAVPRGRPYEIRKLSKNQRRPNRPYGGMYCTNCTKEIIKKEARSL.

Residues 1 to 29 (MSAPRFRNGTFKRTLKRVPGGRKVEHYKK) form a disordered region. Basic residues predominate over residues 13 to 29 (RTLKRVPGGRKVEHYKK).

It belongs to the eukaryotic ribosomal protein eL34 family.

The sequence is that of Large ribosomal subunit protein eL34 from Methanosphaera stadtmanae (strain ATCC 43021 / DSM 3091 / JCM 11832 / MCB-3).